The following is a 334-amino-acid chain: MDQTLIQEILEVVEQAAIASAKLSGKGLKNEADAAAVEAMRKRMGQIQMQGRIVIGEGERDEAPMLYIGEEVGSGTGPGVDFAVDPCEGTNLCAFNQRGSMAVLAASDRGGLFNAPDFYMKKLAAPPAAKGKVDIRKSATENIKILSECLGLAVDELTIVVMDRARHKDLIAEIRATGARIQPISDGDVQAAIACGFAGTGTHCLMGIGAAPEGVISAAAMRALGGHFQGQLVYDPAVAQTSEWADMTKEGNLARLAEMGITDPDKVYEAEELACGEHVCFAGSGITDGLLFHGVKFERDCTRTSSLVISNLDNTCRFTNTVHIKDGAQSIALS.

Mn(2+) contacts are provided by Asp-33, Glu-57, Asp-85, and Glu-88. Residues 88–90, Tyr-119, 164–166, and 186–188 contribute to the substrate site; these read EGT, RAR, and DGD. Mn(2+) is bound at residue Glu-213.

Belongs to the FBPase class 2 family. In terms of assembly, homotetramer. The cofactor is Mn(2+).

The catalysed reaction is beta-D-fructose 1,6-bisphosphate + H2O = beta-D-fructose 6-phosphate + phosphate. It carries out the reaction D-sedoheptulose 1,7-bisphosphate + H2O = D-sedoheptulose 7-phosphate + phosphate. The protein operates within carbohydrate biosynthesis; Calvin cycle. In terms of biological role, catalyzes the hydrolysis of fructose 1,6-bisphosphate (Fru 1,6-P2) and sedoheptulose 1,7-bisphosphate (Sed 1,7-P2) to fructose 6-phosphate and sedoheptulose 7-phosphate, respectively. The polypeptide is D-fructose 1,6-bisphosphatase class 2/sedoheptulose 1,7-bisphosphatase (Parasynechococcus marenigrum (strain WH8102)).